Reading from the N-terminus, the 313-residue chain is tRNA dimethylallyltransferase (313 aa).

11-18 (GPTACGKT) contributes to the ATP binding site. 13–18 (TACGKT) serves as a coordination point for substrate. Interaction with substrate tRNA regions lie at residues 36 to 39 (DSAL), 160 to 164 (QRIER), and 243 to 248 (RCVGYR).

The protein belongs to the IPP transferase family. In terms of assembly, monomer. Mg(2+) is required as a cofactor.

The catalysed reaction is adenosine(37) in tRNA + dimethylallyl diphosphate = N(6)-dimethylallyladenosine(37) in tRNA + diphosphate. Its function is as follows. Catalyzes the transfer of a dimethylallyl group onto the adenine at position 37 in tRNAs that read codons beginning with uridine, leading to the formation of N6-(dimethylallyl)adenosine (i(6)A). The polypeptide is tRNA dimethylallyltransferase (Neisseria meningitidis serogroup C (strain 053442)).